The primary structure comprises 165 residues: Serine/threonine-protein phosphatase 2A 56 kDa regulatory subunit epsilon isoform (165 aa).

Positions 1 to 41 (MSSAPTTPPSVDKVDGFSRKSVRKARQKRSQSSSQFRSQGK) are disordered. S2 is modified (N-acetylserine). A Phosphothreonine modification is found at T7. The span at 20 to 29 (KSVRKARQKR) shows a compositional bias: basic residues. Phosphoserine is present on residues S30, S32, and S34. Low complexity predominate over residues 30 to 41 (SQSSSQFRSQGK).

It belongs to the phosphatase 2A regulatory subunit B56 family. As to quaternary structure, PP2A consists of a common heterodimeric core enzyme, composed of a 36 kDa catalytic subunit (subunit C) and a 65 kDa constant regulatory subunit (PR65 or subunit A), that associates with a variety of regulatory subunits. Proteins that associate with the core dimer include three families of regulatory subunits B (the R2/B/PR55/B55, R3/B''/PR72/PR130/PR59 and R5/B'/B56 families), the 48 kDa variable regulatory subunit, viral proteins, and cell signaling molecules. Interacts with SGO1. Found in a complex with at least ARL2, PPP2CB; PPP2R1A, PPP2R2A, PPP2R5E and TBCD. Highly expressed in testis, lung and brain.

It is found in the cytoplasm. Functionally, the B regulatory subunit might modulate substrate selectivity and catalytic activity, and might also direct the localization of the catalytic enzyme to a particular subcellular compartment. The protein is Serine/threonine-protein phosphatase 2A 56 kDa regulatory subunit epsilon isoform (PPP2R5E) of Oryctolagus cuniculus (Rabbit).